The following is a 291-amino-acid chain: 4-hydroxy-tetrahydrodipicolinate synthase (291 aa).

Pyruvate is bound at residue threonine 45. Tyrosine 133 (proton donor/acceptor) is an active-site residue. The active-site Schiff-base intermediate with substrate is lysine 161. Isoleucine 203 is a pyruvate binding site.

Belongs to the DapA family. In terms of assembly, homotetramer; dimer of dimers.

The protein localises to the cytoplasm. It carries out the reaction L-aspartate 4-semialdehyde + pyruvate = (2S,4S)-4-hydroxy-2,3,4,5-tetrahydrodipicolinate + H2O + H(+). It participates in amino-acid biosynthesis; L-lysine biosynthesis via DAP pathway; (S)-tetrahydrodipicolinate from L-aspartate: step 3/4. Catalyzes the condensation of (S)-aspartate-beta-semialdehyde [(S)-ASA] and pyruvate to 4-hydroxy-tetrahydrodipicolinate (HTPA). In Neisseria meningitidis serogroup C / serotype 2a (strain ATCC 700532 / DSM 15464 / FAM18), this protein is 4-hydroxy-tetrahydrodipicolinate synthase.